We begin with the raw amino-acid sequence, 334 residues long: GTPase Obg (334 aa).

The Obg domain occupies 1-159 (MKFIDQAIIH…RDIQLELMLL (159 aa)). A disordered region spans residues 67–86 (AQNGQNGSSRKSSGKKGDDI). The segment covering 68–77 (QNGQNGSSRK) has biased composition (low complexity). One can recognise an OBG-type G domain in the interval 160-333 (ADVGTLGMPN…LCSDITKYLK (174 aa)). GTP is bound by residues 166 to 173 (GMPNVGKS), 191 to 195 (FTTLH), 213 to 216 (DIPG), 283 to 286 (NKID), and 314 to 316 (SSM). Positions 173 and 193 each coordinate Mg(2+).

The protein belongs to the TRAFAC class OBG-HflX-like GTPase superfamily. OBG GTPase family. Monomer. Mg(2+) serves as cofactor.

The protein localises to the cytoplasm. In terms of biological role, an essential GTPase which binds GTP, GDP and possibly (p)ppGpp with moderate affinity, with high nucleotide exchange rates and a fairly low GTP hydrolysis rate. Plays a role in control of the cell cycle, stress response, ribosome biogenesis and in those bacteria that undergo differentiation, in morphogenesis control. The polypeptide is GTPase Obg (Buchnera aphidicola subsp. Acyrthosiphon pisum (strain 5A)).